Reading from the N-terminus, the 840-residue chain is Multifunctional non-homologous end joining protein LigD (840 aa).

Residues 1 to 32 (MPSSKPLAEYARKRDFRQTPEPSGRKPRKDST) form a disordered region. The interval 7–162 (LAEYARKRDF…SQWFLVKAKD (156 aa)) is 3'-phosphoesterase domain (PE). Residues His42, His48, and Asp50 each coordinate Mn(2+). The interval 189–211 (PRHGEAATPAARPARRGKSGGKT) is disordered. Positions 219–521 (PELASLVEQP…REDKPAREVT (303 aa)) are ligase domain (Lig). Residue Lys238 is the N6-AMP-lysine intermediate of the active site. Mn(2+) is bound by residues Asp240 and Glu376. The interval 514–546 (DKPAREVTGERPAGPPPLRGARKASAGASRAAT) is disordered. Residues 536–546 (KASAGASRAAT) show a composition bias toward low complexity. The DNA repair polymerase domain (Pol) stretch occupies residues 549–793 (VRISHPQRLI…SVPVFREELD (245 aa)). 2 residues coordinate ATP: Phe604 and His651. Residues Asp669 and Asp671 each contribute to the Mn(2+) site. Residues Asp671 and 704–710 (SGGKGMH) each bind ATP. Asp759 serves as a coordination point for Mn(2+). ATP contacts are provided by residues Ser768 and 776-778 (RAR).

The protein in the N-terminal section; belongs to the LigD 3'-phosphoesterase family. It in the central section; belongs to the ATP-dependent DNA ligase family. This sequence in the C-terminal section; belongs to the LigD polymerase family. In terms of assembly, monomer. Interacts with Ku. Requires Mn(2+) as cofactor.

It carries out the reaction ATP + (deoxyribonucleotide)n-3'-hydroxyl + 5'-phospho-(deoxyribonucleotide)m = (deoxyribonucleotide)n+m + AMP + diphosphate.. RNTP addition and end joining activities are stimulated by Ku homodimer. Its function is as follows. With Ku probably forms a non-homologous end joining (NHEJ) repair enzyme, which repairs dsDNA breaks (DSB) with reduced fidelity. Acts as a DNA ligase on singly nicked dsDNA, fills dsDNA gaps (3- or 4- nucleotide gaps, prefers a 5'-phosphate at the gap distal end, prefers dNTPs over rNTPs), has DNA-directed DNA polymerase activity (templated primer extension) and DNA-directed RNA polymerase activity, adds 1 or 2 non-templated rNTP (or less well dNTP) to ssDNA or blunt-end dsDNA (primer extension). Has 3' resection activity, removing 3'-rNMPs from DNA using its 3'-ribonuclease and 3'-phosphatase activities sequentially. Resection requires a 2'-OH in the penultimate nucleoside position (i.e. a ribo- not deoxyribonucleoside), although the 3'-phosphatase activity does not, and its specific activity is 16-fold higher on a DNA substrate. On appropriate substrates will extend a DNA primer to the end of the template strand and then incorporate a non-templated nucleotide. Functionally, the preference of the polymerase domain for rNTPs over dNTPs may be advantageous in quiescent cells where the dNTP pool may be limiting. The sequence is that of Multifunctional non-homologous end joining protein LigD (ligD) from Pseudomonas aeruginosa (strain ATCC 15692 / DSM 22644 / CIP 104116 / JCM 14847 / LMG 12228 / 1C / PRS 101 / PAO1).